The primary structure comprises 345 residues: Dihydroorotase (345 aa).

2 residues coordinate Zn(2+): histidine 14 and histidine 16. Substrate is bound by residues 16–18 (HLR) and asparagine 42. Positions 100, 137, and 175 each coordinate Zn(2+). N6-carboxylysine is present on lysine 100. Histidine 137 contributes to the substrate binding site. A substrate-binding site is contributed by leucine 220. Aspartate 248 contributes to the Zn(2+) binding site. Aspartate 248 is a catalytic residue. Residues histidine 252 and alanine 264 each coordinate substrate.

The protein belongs to the metallo-dependent hydrolases superfamily. DHOase family. Class II DHOase subfamily. Homodimer. Zn(2+) serves as cofactor.

The enzyme catalyses (S)-dihydroorotate + H2O = N-carbamoyl-L-aspartate + H(+). The protein operates within pyrimidine metabolism; UMP biosynthesis via de novo pathway; (S)-dihydroorotate from bicarbonate: step 3/3. Its function is as follows. Catalyzes the reversible cyclization of carbamoyl aspartate to dihydroorotate. This chain is Dihydroorotase, found in Nitrosococcus oceani (strain ATCC 19707 / BCRC 17464 / JCM 30415 / NCIMB 11848 / C-107).